Consider the following 1706-residue polypeptide: Serine/threonine-protein kinase vps15 (1706 aa).

The 270-residue stretch at Tyr24–Phe293 folds into the Protein kinase domain. ATP contacts are provided by residues Leu30–Thr38 and Lys52. An HEAT 1 repeat occupies Asn56 to Leu94. Catalysis depends on Asp146, which acts as the Proton acceptor. 7 HEAT repeats span residues Leu426–Asp465, Glu466–Ser504, Phe511–Lys549, His587–Lys625, Ala626–Pro664, Arg665–Phe703, and Lys705–Asp743. Ser957 carries the phosphoserine modification. Residue Tyr958 is modified to Phosphotyrosine. Residues Thr982–Ser1099 are disordered. Basic and acidic residues-rich tracts occupy residues Lys984–Asn1002 and Asp1014–Glu1023. A compositionally biased stretch (polar residues) spans Asp1029 to Tyr1055. The segment covering Asn1056 to Pro1069 has biased composition (low complexity). Residues Lys1079–Gly1090 show a composition bias toward basic and acidic residues. WD repeat units lie at residues Leu1213–Ser1252 and Leu1368–Ser1407. Polar residues predominate over residues Asn1431–Val1442. The tract at residues Asn1431–Ser1461 is disordered. Residues Cys1577–Ser1622 form a WD 3 repeat.

The protein belongs to the protein kinase superfamily. Ser/Thr protein kinase family. As to quaternary structure, component of the autophagy-specific vps34 PI3-kinase complex I composed of vps15, atg6, pik3/vps34, atg14 and atg38. Also a component of the vps34 PI3-kinase complex II composed of atg6, pik3, vps15 and vps38.

The enzyme catalyses L-seryl-[protein] + ATP = O-phospho-L-seryl-[protein] + ADP + H(+). The catalysed reaction is L-threonyl-[protein] + ATP = O-phospho-L-threonyl-[protein] + ADP + H(+). Its function is as follows. Functions as a part of the autophagy-specific VPS34 PI3-kinase complex I that plays a role in autophagosome assembly. This complex is essential to recruit the atg8-phosphatidylinositol conjugate and the atg12-atg5 conjugate to the pre-autophagosomal structure. Also functions as part of the VPS34 PI3-kinase complex II. In Schizosaccharomyces pombe (strain 972 / ATCC 24843) (Fission yeast), this protein is Serine/threonine-protein kinase vps15.